We begin with the raw amino-acid sequence, 475 residues long: MVSKNTTDKKKNQSIGKVIQVLGSVVDVKFSENSIPKIYDALIVDNNGKKLVLEVEQNIGDEIVRTIAMGPTEGLKRGLDVINTNSPITAPTGMEVLGRMFNVLGDPIDEKPDLDVKREPIHKDAPKYEELVTTTEILETGIKVIDLMIPFTKGGKVGLFGGAGVGKTILIQELINNIAKAHNGVSVFAGVGERTREGNDLYHEFIEAGVLNKTCLVFGQMNEPPGARMRVALTGLTIAEYFRDQKNMDVLLFIDNIFRFTQAGSEVSALLGRMPSAVGYQPTLSTEMGSLQERITSTKNGSITSVQAVYVPADDLTDPAPATTFTHLDARIVLDRSIASLGIYPAVDPLASSSRVLDPEIVGQEHYDIALRVQIALQKYQDLQSIIAILGMDELSEEDKLIVQRARKIRNFLSQSFFVGEKFTGRPGVFVKVNDTVRSFKSILDGEVDYIPETYFLYSSIIDDVIEKYNKDKDK.

161-168 is a binding site for ATP; that stretch reads GGAGVGKT.

Belongs to the ATPase alpha/beta chains family. F-type ATPases have 2 components, CF(1) - the catalytic core - and CF(0) - the membrane proton channel. CF(1) has five subunits: alpha(3), beta(3), gamma(1), delta(1), epsilon(1). CF(0) has three main subunits: a(1), b(2) and c(9-12). The alpha and beta chains form an alternating ring which encloses part of the gamma chain. CF(1) is attached to CF(0) by a central stalk formed by the gamma and epsilon chains, while a peripheral stalk is formed by the delta and b chains.

The protein resides in the cell membrane. It catalyses the reaction ATP + H2O + 4 H(+)(in) = ADP + phosphate + 5 H(+)(out). Its function is as follows. Produces ATP from ADP in the presence of a proton gradient across the membrane. The catalytic sites are hosted primarily by the beta subunits. This is ATP synthase subunit beta from Mycoplasma mycoides subsp. mycoides SC (strain CCUG 32753 / NCTC 10114 / PG1).